A 616-amino-acid polypeptide reads, in one-letter code: Chaperone protein HscA (616 aa).

Belongs to the heat shock protein 70 family.

Chaperone involved in the maturation of iron-sulfur cluster-containing proteins. Has a low intrinsic ATPase activity which is markedly stimulated by HscB. Involved in the maturation of IscU. In Escherichia coli O7:K1 (strain IAI39 / ExPEC), this protein is Chaperone protein HscA.